We begin with the raw amino-acid sequence, 399 residues long: CCA-adding enzyme (399 aa).

ATP-binding residues include Gly-32 and Arg-35. 2 residues coordinate CTP: Gly-32 and Arg-35. Residues Asp-45 and Asp-47 each coordinate Mg(2+). ATP is bound by residues Arg-116, Asp-159, Arg-162, Arg-165, and Arg-168. CTP is bound by residues Arg-116, Asp-159, Arg-162, Arg-165, and Arg-168.

The protein belongs to the tRNA nucleotidyltransferase/poly(A) polymerase family. Bacterial CCA-adding enzyme type 3 subfamily. As to quaternary structure, homodimer. The cofactor is Mg(2+).

It carries out the reaction a tRNA precursor + 2 CTP + ATP = a tRNA with a 3' CCA end + 3 diphosphate. The catalysed reaction is a tRNA with a 3' CCA end + 2 CTP + ATP = a tRNA with a 3' CCACCA end + 3 diphosphate. In terms of biological role, catalyzes the addition and repair of the essential 3'-terminal CCA sequence in tRNAs without using a nucleic acid template. Adds these three nucleotides in the order of C, C, and A to the tRNA nucleotide-73, using CTP and ATP as substrates and producing inorganic pyrophosphate. tRNA 3'-terminal CCA addition is required both for tRNA processing and repair. Also involved in tRNA surveillance by mediating tandem CCA addition to generate a CCACCA at the 3' terminus of unstable tRNAs. While stable tRNAs receive only 3'-terminal CCA, unstable tRNAs are marked with CCACCA and rapidly degraded. The sequence is that of CCA-adding enzyme from Streptococcus gordonii (strain Challis / ATCC 35105 / BCRC 15272 / CH1 / DL1 / V288).